Reading from the N-terminus, the 157-residue chain is Nicotinate dehydrogenase subunit A (157 aa).

The 2Fe-2S ferredoxin-type domain maps to 3-79 (TTISLQVNGQ…GRNITTLEGL (77 aa)). 4 residues coordinate [2Fe-2S] cluster: C41, C46, C49, and C61.

It depends on [2Fe-2S] cluster as a cofactor.

It carries out the reaction 2 Fe(III)-[cytochrome] + nicotinate + H2O = 2 Fe(II)-[cytochrome] + 6-hydroxynicotinate + 2 H(+). The protein operates within cofactor degradation; nicotinate degradation. In terms of biological role, subunit of the two-component enzyme NicAB that mediates nicotinate hydroxylation, the first step in the aerobic nicotinate degradation pathway. Mediates conversion of nicotinate into 6-hydroxynicotinate (6HNA). The protein is Nicotinate dehydrogenase subunit A (nicA) of Pseudomonas putida (strain ATCC 47054 / DSM 6125 / CFBP 8728 / NCIMB 11950 / KT2440).